Here is a 181-residue protein sequence, read N- to C-terminus: Der GTPase-activating protein YihI (181 aa).

The disordered stretch occupies residues 1 to 73; that stretch reads MSRIKKARKP…DPRIGSKKPI (73 aa). Residues 22–32 are compositionally biased toward basic and acidic residues; that stretch reads NRTDRDVESRE. A compositionally biased stretch (basic residues) spans 33–42; the sequence is IKRKRKRKGL. Residues 55-67 are compositionally biased toward basic and acidic residues; it reads QARRNAQKKDPRI.

The protein belongs to the YihI family. As to quaternary structure, interacts with Der.

Functionally, a GTPase-activating protein (GAP) that modifies Der/EngA GTPase function. May play a role in ribosome biogenesis. This Aliivibrio fischeri (strain ATCC 700601 / ES114) (Vibrio fischeri) protein is Der GTPase-activating protein YihI.